The primary structure comprises 66 residues: ATP synthase subunit c (66 aa).

A run of 2 helical transmembrane segments spans residues 3-23 (LTFL…GLLM) and 45-65 (FLGV…SFII).

The protein belongs to the ATPase C chain family. In terms of assembly, F-type ATPases have 2 components, F(1) - the catalytic core - and F(0) - the membrane proton channel. F(1) has five subunits: alpha(3), beta(3), gamma(1), delta(1), epsilon(1). F(0) has three main subunits: a(1), b(2) and c(10-14). The alpha and beta chains form an alternating ring which encloses part of the gamma chain. F(1) is attached to F(0) by a central stalk formed by the gamma and epsilon chains, while a peripheral stalk is formed by the delta and b chains.

It is found in the cell membrane. Functionally, f(1)F(0) ATP synthase produces ATP from ADP in the presence of a proton or sodium gradient. F-type ATPases consist of two structural domains, F(1) containing the extramembraneous catalytic core and F(0) containing the membrane proton channel, linked together by a central stalk and a peripheral stalk. During catalysis, ATP synthesis in the catalytic domain of F(1) is coupled via a rotary mechanism of the central stalk subunits to proton translocation. In terms of biological role, key component of the F(0) channel; it plays a direct role in translocation across the membrane. A homomeric c-ring of between 10-14 subunits forms the central stalk rotor element with the F(1) delta and epsilon subunits. The sequence is that of ATP synthase subunit c from Streptococcus pneumoniae serotype 19F (strain G54).